The primary structure comprises 283 residues: Elongation factor Ts (283 aa).

The interval 79-82 is involved in Mg(2+) ion dislocation from EF-Tu; it reads TDFV.

Belongs to the EF-Ts family.

It is found in the cytoplasm. Its function is as follows. Associates with the EF-Tu.GDP complex and induces the exchange of GDP to GTP. It remains bound to the aminoacyl-tRNA.EF-Tu.GTP complex up to the GTP hydrolysis stage on the ribosome. In Shewanella putrefaciens (strain CN-32 / ATCC BAA-453), this protein is Elongation factor Ts.